Consider the following 150-residue polypeptide: Ventricular natriuretic peptide (150 aa).

The first 21 residues, 1-21 (MAKSGIYLGCFILILIQNMVA), serve as a signal peptide directing secretion. Residues 52-75 (EEPEVYPESEDMKMDAEEEDAGIS) form a disordered region. Cys120 and Cys136 are joined by a disulfide.

The protein belongs to the natriuretic peptide family. In terms of tissue distribution, heart ventricle, and to a lower extent in heart atrium.

It is found in the secreted. Functionally, exhibits natriuretic and vasodepressor activity. This chain is Ventricular natriuretic peptide (vnp), found in Anguilla japonica (Japanese eel).